Here is a 495-residue protein sequence, read N- to C-terminus: 3-octaprenyl-4-hydroxybenzoate carboxy-lyase (495 aa).

Position 172 (asparagine 172) interacts with Mn(2+). Prenylated FMN is bound by residues 175-177 (IYR), 189-191 (RWL), and 194-195 (RG). Glutamate 238 provides a ligand contact to Mn(2+). Catalysis depends on aspartate 287, which acts as the Proton donor.

The protein belongs to the UbiD family. Homohexamer. It depends on prenylated FMN as a cofactor. Mn(2+) is required as a cofactor.

Its subcellular location is the cell membrane. The catalysed reaction is a 4-hydroxy-3-(all-trans-polyprenyl)benzoate + H(+) = a 2-(all-trans-polyprenyl)phenol + CO2. It functions in the pathway cofactor biosynthesis; ubiquinone biosynthesis. In terms of biological role, catalyzes the decarboxylation of 3-octaprenyl-4-hydroxy benzoate to 2-octaprenylphenol, an intermediate step in ubiquinone biosynthesis. The sequence is that of 3-octaprenyl-4-hydroxybenzoate carboxy-lyase from Yersinia pestis bv. Antiqua (strain Angola).